Here is a 433-residue protein sequence, read N- to C-terminus: MLNRGTFQVFRGISGPPKKSVDLPKYDLVIVGGGIVGCATARQLLIEKPQLKVALIEKEKELAVHQSGHNSGVIHAGIYYTPGSLKAKLCVEGLDLSYEFFDKEKVPYKKTGKLIVAVEPEEVPRLDALFSRAQTNGCRDIEMIDSSKITELEPHCRGLKALWSPHTGIVDWGYVTKRFGEDFEKRGGKIYTSYPLEKISDNHDPGYPIRVSSGPALAEFETKNLITCAGLQSDRVAALSGCSTDPKIVPFRGEYLLLKPEKRHLVKTNIYPVPDPRFPFLGVHFTPRMNGDIWLGPNAVLAYKREGYSYFSISPSDLLESLSYSGMQKLVKKHFTFGIKELYRGVWIAAQVKQLQRFIPELKLSDVTRGPAGVRAQAMDSAGNLVDDFVFDSGTGKLSPLLMHVRNAPSPAATSSLAIAKMITSEAINRFKL.

The protein belongs to the L2HGDH family. It depends on FAD as a cofactor.

It localises to the mitochondrion. It catalyses the reaction (S)-2-hydroxyglutarate + A = 2-oxoglutarate + AH2. The protein is L-2-hydroxyglutarate dehydrogenase, mitochondrial of Caenorhabditis elegans.